A 442-amino-acid chain; its full sequence is Exodeoxyribonuclease 7 large subunit (442 aa).

Belongs to the XseA family. Heterooligomer composed of large and small subunits.

Its subcellular location is the cytoplasm. The enzyme catalyses Exonucleolytic cleavage in either 5'- to 3'- or 3'- to 5'-direction to yield nucleoside 5'-phosphates.. Bidirectionally degrades single-stranded DNA into large acid-insoluble oligonucleotides, which are then degraded further into small acid-soluble oligonucleotides. The polypeptide is Exodeoxyribonuclease 7 large subunit (Rickettsia bellii (strain OSU 85-389)).